Consider the following 318-residue polypeptide: Olfactory receptor-like protein COR3 (318 aa).

The Extracellular segment spans residues 1–26 (MASGNCTTPTTFILSGLTDNPGLQMP). A glycan (N-linked (GlcNAc...) asparagine) is linked at Asn-5. A helical membrane pass occupies residues 27-49 (LFMVFLAIYTITLLTNLGLIRLI). The Cytoplasmic segment spans residues 50-57 (SVDLHLQT). Residues 58-79 (PMYIFLQNLSFTDAAYSTVITP) traverse the membrane as a helical segment. Over 80–100 (KMLATFLEERKTISYVGCILQ) the chain is Extracellular. Residues Cys-97 and Cys-179 are joined by a disulfide bond. A helical membrane pass occupies residues 101–120 (YFSFVLLTTSECLLLAVMAY). Residues 121-139 (DRYVAICKPLLYPAIMTKA) are Cytoplasmic-facing. Residues 140–164 (VCWRLVESLYFLAFLNSLVHTCGLL) form a helical membrane-spanning segment. The Extracellular segment spans residues 165 to 205 (KLSFCYSNVVNHFFCDISPLFQISSSSIAISELLVIISGSL). Residues 206–226 (FVMSSIIIILISYVFIILTVV) traverse the membrane as a helical segment. Over 227–239 (MIRSKDGKYKAFS) the chain is Cytoplasmic. The helical transmembrane segment at 240 to 260 (TCTSHLMAVSLFHGTVIFMYL) threads the bilayer. Residues 261 to 271 (RPVKLFSLDTD) are Extracellular-facing. Residues 272 to 292 (KIASLFYTVVIPMLNPLIYSW) form a helical membrane-spanning segment. Topologically, residues 293-318 (RNKEVKDALRRLTATTFGFIDSKAVQ) are cytoplasmic.

It belongs to the G-protein coupled receptor 1 family.

It is found in the cell membrane. Functionally, odorant receptor. This is Olfactory receptor-like protein COR3 (COR3) from Gallus gallus (Chicken).